The following is a 494-amino-acid chain: Costunolide synthase (494 aa).

A helical transmembrane segment spans residues P3–S23. Residue C432 coordinates heme.

Belongs to the cytochrome P450 family. It depends on heme as a cofactor.

It is found in the membrane. The catalysed reaction is germacra-1(10),4,11(13)-trien-12-oate + reduced [NADPH--hemoprotein reductase] + O2 = (+)-costunolide + oxidized [NADPH--hemoprotein reductase] + 2 H2O. Its function is as follows. Hydroxylates germacrene A acid to 6-alpha-hydroxy-germacrne A acid, a precursor of sesquiterpene lactones that spontaneously undergoes a lactonization which yields costunolide. Costunolide can then spontaneously conjugate to glutathione or cysteine. This is Costunolide synthase (CYP71BL3) from Cichorium intybus (Chicory).